The following is a 711-amino-acid chain: DNA topoisomerase 3 (711 aa).

In terms of domain architecture, Toprim spans 2-135; sequence KSLILAEKPS…IRRLWISSVT (134 aa). Residues Glu8 and Asp104 each coordinate Mg(2+). The Topo IA-type catalytic domain occupies 152 to 580; the sequence is YNDLYYAALA…EMKDFTKDVV (429 aa). Residues 186–191 are interaction with DNA; it reads SLGRVQ. The active-site O-(5'-phospho-DNA)-tyrosine intermediate is Tyr305. Residues 691 to 711 are disordered; sequence MNKNEGLDNNPFKDALKNLNL.

Belongs to the type IA topoisomerase family. The cofactor is Mg(2+).

It carries out the reaction ATP-independent breakage of single-stranded DNA, followed by passage and rejoining.. In terms of biological role, releases the supercoiling and torsional tension of DNA, which is introduced during the DNA replication and transcription, by transiently cleaving and rejoining one strand of the DNA duplex. Introduces a single-strand break via transesterification at a target site in duplex DNA. The scissile phosphodiester is attacked by the catalytic tyrosine of the enzyme, resulting in the formation of a DNA-(5'-phosphotyrosyl)-enzyme intermediate and the expulsion of a 3'-OH DNA strand. The free DNA strand then undergoes passage around the unbroken strand, thus removing DNA supercoils. Finally, in the religation step, the DNA 3'-OH attacks the covalent intermediate to expel the active-site tyrosine and restore the DNA phosphodiester backbone. This is DNA topoisomerase 3 from Staphylococcus aureus (strain Mu50 / ATCC 700699).